A 173-amino-acid polypeptide reads, in one-letter code: Putative metal-dependent hydrolase BT9727_2476 (173 aa).

3 residues coordinate Zn(2+): histidine 65, histidine 156, and histidine 160.

The protein belongs to the metal hydrolase YfiT family. Homodimer. Zn(2+) is required as a cofactor.

Its subcellular location is the cytoplasm. In terms of biological role, possible metal-dependent hydrolase. The protein is Putative metal-dependent hydrolase BT9727_2476 of Bacillus thuringiensis subsp. konkukian (strain 97-27).